Consider the following 122-residue polypeptide: Large ribosomal subunit protein uL14 (122 aa).

The protein belongs to the universal ribosomal protein uL14 family. Part of the 50S ribosomal subunit. Forms a cluster with proteins L3 and L19. In the 70S ribosome, L14 and L19 interact and together make contacts with the 16S rRNA in bridges B5 and B8.

Its function is as follows. Binds to 23S rRNA. Forms part of two intersubunit bridges in the 70S ribosome. The protein is Large ribosomal subunit protein uL14 of Chlorobaculum tepidum (strain ATCC 49652 / DSM 12025 / NBRC 103806 / TLS) (Chlorobium tepidum).